The chain runs to 431 residues: NADH-quinone oxidoreductase subunit D 2 (431 aa).

Positions 1-37 (MSEAKGVGGIDPRATPGSAGAGERPPMGTLSPRAGEG) are disordered.

The protein belongs to the complex I 49 kDa subunit family. As to quaternary structure, NDH-1 is composed of 14 different subunits. Subunits NuoB, C, D, E, F, and G constitute the peripheral sector of the complex.

The protein localises to the cell inner membrane. The catalysed reaction is a quinone + NADH + 5 H(+)(in) = a quinol + NAD(+) + 4 H(+)(out). Functionally, NDH-1 shuttles electrons from NADH, via FMN and iron-sulfur (Fe-S) centers, to quinones in the respiratory chain. The immediate electron acceptor for the enzyme in this species is believed to be ubiquinone. Couples the redox reaction to proton translocation (for every two electrons transferred, four hydrogen ions are translocated across the cytoplasmic membrane), and thus conserves the redox energy in a proton gradient. This Anaeromyxobacter sp. (strain K) protein is NADH-quinone oxidoreductase subunit D 2.